The following is a 336-amino-acid chain: Ketol-acid reductoisomerase (NADP(+)) (336 aa).

The 181-residue stretch at 5–185 (SKIYTDKDSN…GATRAGVIPT (181 aa)) folds into the KARI N-terminal Rossmann domain. NADP(+) is bound by residues 28-31 (YGSQ), Ser56, and 86-89 (DMVQ). The active site involves His111. Residue Gly137 participates in NADP(+) binding. The region spanning 186 to 331 (TFKEETETDL…NQLKDLIQKG (146 aa)) is the KARI C-terminal knotted domain. Mg(2+) contacts are provided by Asp194, Glu198, Glu230, and Glu234. Ser255 is a binding site for substrate.

This sequence belongs to the ketol-acid reductoisomerase family. It depends on Mg(2+) as a cofactor.

It carries out the reaction (2R)-2,3-dihydroxy-3-methylbutanoate + NADP(+) = (2S)-2-acetolactate + NADPH + H(+). The enzyme catalyses (2R,3R)-2,3-dihydroxy-3-methylpentanoate + NADP(+) = (S)-2-ethyl-2-hydroxy-3-oxobutanoate + NADPH + H(+). It participates in amino-acid biosynthesis; L-isoleucine biosynthesis; L-isoleucine from 2-oxobutanoate: step 2/4. It functions in the pathway amino-acid biosynthesis; L-valine biosynthesis; L-valine from pyruvate: step 2/4. Functionally, involved in the biosynthesis of branched-chain amino acids (BCAA). Catalyzes an alkyl-migration followed by a ketol-acid reduction of (S)-2-acetolactate (S2AL) to yield (R)-2,3-dihydroxy-isovalerate. In the isomerase reaction, S2AL is rearranged via a Mg-dependent methyl migration to produce 3-hydroxy-3-methyl-2-ketobutyrate (HMKB). In the reductase reaction, this 2-ketoacid undergoes a metal-dependent reduction by NADPH to yield (R)-2,3-dihydroxy-isovalerate. The polypeptide is Ketol-acid reductoisomerase (NADP(+)) (Saccharolobus islandicus (strain Y.N.15.51 / Yellowstone #2) (Sulfolobus islandicus)).